The chain runs to 372 residues: Chorismate synthase (372 aa).

R48 and R54 together coordinate NADP(+). FMN-binding positions include 125–127 (RSS), 238–239 (NA), G278, 293–297 (KPTSS), and R319.

It belongs to the chorismate synthase family. In terms of assembly, homotetramer. FMNH2 serves as cofactor.

The catalysed reaction is 5-O-(1-carboxyvinyl)-3-phosphoshikimate = chorismate + phosphate. The protein operates within metabolic intermediate biosynthesis; chorismate biosynthesis; chorismate from D-erythrose 4-phosphate and phosphoenolpyruvate: step 7/7. Functionally, catalyzes the anti-1,4-elimination of the C-3 phosphate and the C-6 proR hydrogen from 5-enolpyruvylshikimate-3-phosphate (EPSP) to yield chorismate, which is the branch point compound that serves as the starting substrate for the three terminal pathways of aromatic amino acid biosynthesis. This reaction introduces a second double bond into the aromatic ring system. This is Chorismate synthase from Xylella fastidiosa (strain M23).